Reading from the N-terminus, the 392-residue chain is Alkaline phosphatase L (392 aa).

The first 23 residues, 1 to 23, serve as a signal peptide directing secretion; the sequence is MYKRSLIAASLSVAALVSAQAMA.

It belongs to the PstS family. In terms of assembly, homodimer.

The protein localises to the secreted. It localises to the periplasm. The enzyme catalyses a phosphate monoester + H2O = an alcohol + phosphate. Functionally, has both a phosphomonoesterase and phosphodiesterase activity. In Pseudomonas aeruginosa (strain UCBPP-PA14), this protein is Alkaline phosphatase L.